Here is a 204-residue protein sequence, read N- to C-terminus: Inactive ribonuclease-like protein 9 (204 aa).

An N-terminal signal peptide occupies residues Met1 to Phe26. Intrachain disulfides connect Cys97–Cys152, Cys115–Cys167, and Cys122–Cys129. N-linked (GlcNAc...) asparagine glycosylation is found at Asn130 and Asn142.

This sequence belongs to the pancreatic ribonuclease family.

It localises to the secreted. Does not exhibit any ribonuclease activity. This chain is Inactive ribonuclease-like protein 9 (RNASE9), found in Macaca nemestrina (Pig-tailed macaque).